Here is a 414-residue protein sequence, read N- to C-terminus: Stork-head box protein ham-1 (414 aa).

The segment at 1 to 31 (MTYLAVVLNGPKAKNGRKVFDSFLEQNRQMF) is essential for association with cell cortex. A Winged helix Storkhead-box1 domain is found at 93–170 (QQVEQMHFVP…MADHYFVSVP (78 aa)). Positions 282 to 362 (ECQRKARRRN…SNEEAGSISD (81 aa)) are disordered. The bi-partite nuclear localization signal stretch occupies residues 285-295 (RKARRRNHPRR). Positions 321-327 (PTRRRAR) are nuclear localization signal. Residues 332-351 (LRSSTPNNSDSAYSISPPHT) are compositionally biased toward polar residues.

It is found in the cytoplasm. The protein localises to the cell cortex. It localises to the nucleus. Its function is as follows. Probable transcription factor. Required for asymmetric cell division in neuroblasts, perhaps acting by regulating spindle positioning and myosin polarization, and thus the position of the cleavage plane. Required to produce daughter cell size asymmetry in neuroblasts undergoing asymmetric cell division, usually giving rise to one precursor cell and one apoptotic cell. Positively modulates expression of the serine/threonine kinase pig-1/MELK during asymmetric division of the Q.a neuroblast. Plays a role in neural fate specification in several dopaminergic lineages, including the hermaphrodite-specific neuron (HSN)/phasmid neuron (PHB), acting in concert with the kinase, ham-1, and the T-box protein tbx-2 and the homeobox protein egl-5. This is Stork-head box protein ham-1 from Caenorhabditis elegans.